Here is a 175-residue protein sequence, read N- to C-terminus: Alpha-crystallin B chain (175 aa).

N-acetylmethionine is present on M1. S19 bears the Phosphoserine mark. An O-linked (GlcNAc) serine glycan is attached at S41. S45 and S59 each carry phosphoserine. The sHSP domain maps to 56-164 (RAPSWIDTGL…PERTIPITRE (109 aa)). H83 contacts Zn(2+). The residue at position 92 (K92) is an N6-acetyllysine. Zn(2+) contacts are provided by H104, E106, H111, and H119. The tract at residues 139-175 (SDGVLTMNGPRKQASGPERTIPITREEKPAVTAAPKK) is disordered. Residue K166 is modified to N6-acetyllysine. A glycan (O-linked (GlcNAc) threonine) is linked at T170.

It belongs to the small heat shock protein (HSP20) family. As to quaternary structure, heteromer composed of three CRYAA and one CRYAB subunits. Aggregates with homologous proteins, including the small heat shock protein HSPB1, to form large heteromeric complexes. Inter-subunit bridging via zinc ions enhances stability, which is crucial as there is no protein turn over in the lens. Interacts with HSPBAP1 and TTN/titin. Interacts with TMEM109; in the cellular response to DNA damage. Interacts with DES; binds rapidly during early stages of DES filament assembly and a reduced binding seen in the later stages. Interacts with ATP6V1A and with MTOR, forming a ternary complex.

It is found in the cytoplasm. It localises to the nucleus. Its subcellular location is the secreted. The protein resides in the lysosome. In terms of biological role, may contribute to the transparency and refractive index of the lens. Has chaperone-like activity, preventing aggregation of various proteins under a wide range of stress conditions. In lens epithelial cells, stabilizes the ATP6V1A protein, preventing its degradation by the proteasome. In Ovis aries (Sheep), this protein is Alpha-crystallin B chain (CRYAB).